The sequence spans 736 residues: Elongation factor 2 (736 aa).

In terms of domain architecture, tr-type G spans 19–262 (DQIRNIGIIA…MVIKFVPNPR (244 aa)). Residues 28-35 (AHVDHGKT), 94-98 (DTPGH), and 148-151 (NKVD) each bind GTP. At His-602 the chain carries Diphthamide.

This sequence belongs to the TRAFAC class translation factor GTPase superfamily. Classic translation factor GTPase family. EF-G/EF-2 subfamily.

The protein resides in the cytoplasm. In terms of biological role, catalyzes the GTP-dependent ribosomal translocation step during translation elongation. During this step, the ribosome changes from the pre-translocational (PRE) to the post-translocational (POST) state as the newly formed A-site-bound peptidyl-tRNA and P-site-bound deacylated tRNA move to the P and E sites, respectively. Catalyzes the coordinated movement of the two tRNA molecules, the mRNA and conformational changes in the ribosome. This chain is Elongation factor 2 (fusA), found in Aeropyrum pernix (strain ATCC 700893 / DSM 11879 / JCM 9820 / NBRC 100138 / K1).